A 331-amino-acid polypeptide reads, in one-letter code: Ketol-acid reductoisomerase (NADP(+)) (331 aa).

The KARI N-terminal Rossmann domain maps to 2-182 (ARMYYDEDGN…GGTRAGILET (181 aa)). Residues 25-28 (YGSQ), serine 51, serine 53, and 83-86 (DEVQ) each bind NADP(+). Histidine 108 is a catalytic residue. NADP(+) is bound at residue glycine 134. A KARI C-terminal knotted domain is found at 183–328 (SFREETETDL…KDLRAMFSWL (146 aa)). 4 residues coordinate Mg(2+): aspartate 191, glutamate 195, glutamate 227, and glutamate 231. Serine 252 provides a ligand contact to substrate.

It belongs to the ketol-acid reductoisomerase family. Requires Mg(2+) as cofactor.

The enzyme catalyses (2R)-2,3-dihydroxy-3-methylbutanoate + NADP(+) = (2S)-2-acetolactate + NADPH + H(+). It carries out the reaction (2R,3R)-2,3-dihydroxy-3-methylpentanoate + NADP(+) = (S)-2-ethyl-2-hydroxy-3-oxobutanoate + NADPH + H(+). It functions in the pathway amino-acid biosynthesis; L-isoleucine biosynthesis; L-isoleucine from 2-oxobutanoate: step 2/4. It participates in amino-acid biosynthesis; L-valine biosynthesis; L-valine from pyruvate: step 2/4. Its function is as follows. Involved in the biosynthesis of branched-chain amino acids (BCAA). Catalyzes an alkyl-migration followed by a ketol-acid reduction of (S)-2-acetolactate (S2AL) to yield (R)-2,3-dihydroxy-isovalerate. In the isomerase reaction, S2AL is rearranged via a Mg-dependent methyl migration to produce 3-hydroxy-3-methyl-2-ketobutyrate (HMKB). In the reductase reaction, this 2-ketoacid undergoes a metal-dependent reduction by NADPH to yield (R)-2,3-dihydroxy-isovalerate. This is Ketol-acid reductoisomerase (NADP(+)) from Gloeothece citriformis (strain PCC 7424) (Cyanothece sp. (strain PCC 7424)).